Consider the following 180-residue polypeptide: ATP synthase subunit delta, chloroplastic (180 aa).

This sequence belongs to the ATPase delta chain family. In terms of assembly, F-type ATPases have 2 components, F(1) - the catalytic core - and F(0) - the membrane proton channel. F(1) has five subunits: alpha(3), beta(3), gamma(1), delta(1), epsilon(1). CF(0) has four main subunits: a(1), b(1), b'(1) and c(10-14). The alpha and beta chains form an alternating ring which encloses part of the gamma chain. F(1) is attached to F(0) by a central stalk formed by the gamma and epsilon chains, while a peripheral stalk is formed by the delta, b and b' chains.

The protein resides in the plastid. The protein localises to the chloroplast thylakoid membrane. F(1)F(0) ATP synthase produces ATP from ADP in the presence of a proton or sodium gradient. F-type ATPases consist of two structural domains, F(1) containing the extramembraneous catalytic core and F(0) containing the membrane proton channel, linked together by a central stalk and a peripheral stalk. During catalysis, ATP synthesis in the catalytic domain of F(1) is coupled via a rotary mechanism of the central stalk subunits to proton translocation. Functionally, this protein is part of the stalk that links CF(0) to CF(1). It either transmits conformational changes from CF(0) to CF(1) or is implicated in proton conduction. This chain is ATP synthase subunit delta, chloroplastic, found in Rhodomonas salina (Cryptomonas salina).